The primary structure comprises 522 residues: Thiamine biosynthetic bifunctional enzyme TH1, chloroplastic (522 aa).

A chloroplast-targeting transit peptide spans 1 to 36 (MNSLGGIRSWPANWRSTTASMTTTESVRKVPQVLTV). 4-amino-2-methyl-5-(diphosphooxymethyl)pyrimidine is bound by residues 345-349 (QLREK) and N377. Mg(2+)-binding residues include D378 and D397. A 4-amino-2-methyl-5-(diphosphooxymethyl)pyrimidine-binding site is contributed by S416. 442–444 (TNT) provides a ligand contact to 2-[(2R,5Z)-2-carboxy-4-methylthiazol-5(2H)-ylidene]ethyl phosphate. K445 contributes to the 4-amino-2-methyl-5-(diphosphooxymethyl)pyrimidine binding site. Residues G472 and 495 to 496 (VS) each bind 2-[(2R,5Z)-2-carboxy-4-methylthiazol-5(2H)-ylidene]ethyl phosphate.

Belongs to the thiamine-phosphate synthase family. Mg(2+) serves as cofactor.

It localises to the plastid. The protein localises to the chloroplast. The enzyme catalyses 2-[(2R,5Z)-2-carboxy-4-methylthiazol-5(2H)-ylidene]ethyl phosphate + 4-amino-2-methyl-5-(diphosphooxymethyl)pyrimidine + 2 H(+) = thiamine phosphate + CO2 + diphosphate. The catalysed reaction is 2-(2-carboxy-4-methylthiazol-5-yl)ethyl phosphate + 4-amino-2-methyl-5-(diphosphooxymethyl)pyrimidine + 2 H(+) = thiamine phosphate + CO2 + diphosphate. It carries out the reaction 4-methyl-5-(2-phosphooxyethyl)-thiazole + 4-amino-2-methyl-5-(diphosphooxymethyl)pyrimidine + H(+) = thiamine phosphate + diphosphate. It catalyses the reaction 4-amino-5-hydroxymethyl-2-methylpyrimidine + ATP = 4-amino-2-methyl-5-(phosphooxymethyl)pyrimidine + ADP + H(+). It participates in cofactor biosynthesis; thiamine diphosphate biosynthesis; thiamine phosphate from 4-amino-2-methyl-5-diphosphomethylpyrimidine and 4-methyl-5-(2-phosphoethyl)-thiazole: step 1/1. Its pathway is cofactor biosynthesis; thiamine diphosphate biosynthesis; 4-amino-2-methyl-5-diphosphomethylpyrimidine from 5-amino-1-(5-phospho-D-ribosyl)imidazole: step 2/3. Its function is as follows. Essential for thiamine biosynthesis. Bifunctional enzyme that catalyzes the phosphorylation of hydroxymethylpyrimidine phosphate (HMP-P) to HMP-PP and condenses 4-methyl-5-(beta-hydroxyethyl)thiazole monophosphate (THZ-P) and 2-methyl-4-amino-5-hydroxymethyl pyrimidine pyrophosphate (HMP-PP) to form thiamine monophosphate (TMP). In Arabidopsis thaliana (Mouse-ear cress), this protein is Thiamine biosynthetic bifunctional enzyme TH1, chloroplastic (TH1).